The primary structure comprises 401 residues: Probable thioesterase FGSG_00047 (401 aa).

Residues 379–401 (AREMDQRKRQKDFTHTTIHDKNS) form a disordered region.

The protein belongs to the AMT4 thioesterase family.

It functions in the pathway mycotoxin biosynthesis. Probable thioesterase; part of the gene cluster that mediates the biosynthesis of gramillins A and B, bicyclic lipopeptides that induce cell death in maize leaves but not in wheat leaves. The nonribosomal peptide synthetase GRA1 incorporates respectively a glutamic adic (Glu), a leucine (Leu), a serine (Ser), a hydroxyglutamine (HOGln), a 2-amino decanoic acid, and 2 cysteins (CysB and CysA). The biosynthesis of 2-amino decanoic acid incorporated in gramillins could be initiated by a fatty acid synthase composed of the alpha and beta subunits FGSG_00036 and FGSG_11656. The cytochrome P450 monooxygenase FGSG_15680 could hydroxylate the fatty acid chain. Subsequent oxidation to the ketone by the oxidoreductase FGSG_00048 and transamination by aminotransferase FGSG_00049 could form 2-amino-decanoic acid. On the other hand, FGSG_15680 could also be responsible for the HO-modified glutamine at the gamma-position. Whether hydroxylation occurs on the fully assembled product or on the Gln residue prior to assembly into the gramillins requires further proof. The thioredoxin FGSG_00043 could also be required for the disulfide-bond formation between CysA and CysB. The specific involvement of the remaining proteins from the cluster is more difficult to discern, but could have broader regulatory (FGSG_00040 and FGSG_11657) or enzymatic functions (FGSG_00044 and FGSG_00045). The final C-domain of GRA1 does not possess the expected sequence of a termination CT domain, often implicated in macrocyclization and release of a cyclopeptidein fungal NRPs; and the thioesterase FGSG_00047 may act in concert with the terminal C-domain of GRA1 to catalyze the formation of the macrocyclic anhydride and release of the products. The chain is Probable thioesterase FGSG_00047 from Gibberella zeae (strain ATCC MYA-4620 / CBS 123657 / FGSC 9075 / NRRL 31084 / PH-1) (Wheat head blight fungus).